The primary structure comprises 184 residues: Protein FAM89A (184 aa).

A disordered region spans residues 148 to 184 (YFQEQNSLHDRRDRGPPRDLSLPVSSLSSSDWILESI). Residues 154–164 (SLHDRRDRGPP) are compositionally biased toward basic and acidic residues. Over residues 167–184 (LSLPVSSLSSSDWILESI) the composition is skewed to low complexity.

This sequence belongs to the FAM89 family.

This Homo sapiens (Human) protein is Protein FAM89A (FAM89A).